The chain runs to 188 residues: Elongation factor P (188 aa).

Lysine 34 bears the N6-(3,6-diaminohexanoyl)-5-hydroxylysine mark.

This sequence belongs to the elongation factor P family. May be beta-lysylated on the epsilon-amino group of Lys-34 by the combined action of EpmA and EpmB, and then hydroxylated on the C5 position of the same residue by EpmC (if this protein is present). Lysylation is critical for the stimulatory effect of EF-P on peptide-bond formation. The lysylation moiety may extend toward the peptidyltransferase center and stabilize the terminal 3-CCA end of the tRNA. Hydroxylation of the C5 position on Lys-34 may allow additional potential stabilizing hydrogen-bond interactions with the P-tRNA.

The protein localises to the cytoplasm. Its pathway is protein biosynthesis; polypeptide chain elongation. In terms of biological role, involved in peptide bond synthesis. Alleviates ribosome stalling that occurs when 3 or more consecutive Pro residues or the sequence PPG is present in a protein, possibly by augmenting the peptidyl transferase activity of the ribosome. Modification of Lys-34 is required for alleviation. This chain is Elongation factor P, found in Pectobacterium atrosepticum (strain SCRI 1043 / ATCC BAA-672) (Erwinia carotovora subsp. atroseptica).